The sequence spans 203 residues: Thymidylate kinase (203 aa).

Glycine 7–threonine 14 provides a ligand contact to ATP.

The protein belongs to the thymidylate kinase family.

It carries out the reaction dTMP + ATP = dTDP + ADP. In terms of biological role, phosphorylation of dTMP to form dTDP in both de novo and salvage pathways of dTTP synthesis. The sequence is that of Thymidylate kinase (tmk) from Chlamydia trachomatis serovar D (strain ATCC VR-885 / DSM 19411 / UW-3/Cx).